Reading from the N-terminus, the 254-residue chain is 5-oxoprolinase subunit A (254 aa).

Belongs to the LamB/PxpA family. Forms a complex composed of PxpA, PxpB and PxpC.

It carries out the reaction 5-oxo-L-proline + ATP + 2 H2O = L-glutamate + ADP + phosphate + H(+). Functionally, catalyzes the cleavage of 5-oxoproline to form L-glutamate coupled to the hydrolysis of ATP to ADP and inorganic phosphate. In Burkholderia ambifaria (strain MC40-6), this protein is 5-oxoprolinase subunit A.